An 869-amino-acid polypeptide reads, in one-letter code: Aminopeptidase N (869 aa).

Substrate is bound by residues glutamate 122 and glycine 262–asparagine 266. Residue histidine 298 participates in Zn(2+) binding. The Proton acceptor role is filled by glutamate 299. Residues histidine 302 and glutamate 321 each coordinate Zn(2+).

The protein belongs to the peptidase M1 family. The cofactor is Zn(2+).

Its subcellular location is the cell inner membrane. It carries out the reaction Release of an N-terminal amino acid, Xaa-|-Yaa- from a peptide, amide or arylamide. Xaa is preferably Ala, but may be most amino acids including Pro (slow action). When a terminal hydrophobic residue is followed by a prolyl residue, the two may be released as an intact Xaa-Pro dipeptide.. Functionally, aminopeptidase N is involved in the degradation of intracellular peptides generated by protein breakdown during normal growth as well as in response to nutrient starvation. The chain is Aminopeptidase N (pepN) from Haemophilus influenzae (strain ATCC 51907 / DSM 11121 / KW20 / Rd).